We begin with the raw amino-acid sequence, 489 residues long: Mitochondrial-processing peptidase subunit beta (489 aa).

The transit peptide at 1 to 45 directs the protein to the mitochondrion; the sequence is MAAAAVSRTLLPVAGRRLWGFTRRLPLRAAAAQPLYFGGDRLRST. Residue His-101 coordinates Zn(2+). The active-site Proton acceptor is the Glu-104. Residues His-105 and Glu-181 each contribute to the Zn(2+) site.

Belongs to the peptidase M16 family. Heterodimer of PMPCA (alpha) and PMPCB (beta) subunits, forming the mitochondrial processing protease (MPP) in which PMPCA is involved in substrate recognition and binding and PMPCB is the catalytic subunit. Requires Zn(2+) as cofactor.

The protein resides in the mitochondrion matrix. It catalyses the reaction Release of N-terminal transit peptides from precursor proteins imported into the mitochondrion, typically with Arg in position P2.. Its activity is regulated as follows. Binding to PMPCA is required for catalytic activity. Functionally, catalytic subunit of the essential mitochondrial processing protease (MPP), which cleaves the mitochondrial sequence off newly imported precursors proteins. Preferentially, cleaves after an arginine at position P2. Required for PINK1 turnover by coupling PINK1 mitochondrial import and cleavage, which results in subsequent PINK1 proteolysis. The protein is Mitochondrial-processing peptidase subunit beta (Pmpcb) of Rattus norvegicus (Rat).